A 907-amino-acid chain; its full sequence is Translation initiation factor IF-2 (907 aa).

A disordered region spans residues 26–317; sequence DAGMKKSSSD…KPKSMQHGFD (292 aa). Basic and acidic residues-rich tracts occupy residues 28–44 and 101–248; these read GMKK…EKQK and SAIE…DTDY. Basic residues predominate over residues 299–308; the sequence is KGGRKGKLSK. The 170-residue stretch at 406–575 folds into the tr-type G domain; that stretch reads PRAPVVTIMG…LLQAEVLELT (170 aa). The G1 stretch occupies residues 415–422; that stretch reads GHVDHGKT. Residue 415 to 422 participates in GTP binding; sequence GHVDHGKT. Positions 440 to 444 are G2; that stretch reads GITQH. Residues 461 to 464 form a G3 region; the sequence is DTPG. GTP contacts are provided by residues 461–465 and 515–518; these read DTPGH and NKID. Positions 515–518 are G4; that stretch reads NKID. The G5 stretch occupies residues 551–553; sequence SAK.

It belongs to the TRAFAC class translation factor GTPase superfamily. Classic translation factor GTPase family. IF-2 subfamily.

The protein resides in the cytoplasm. In terms of biological role, one of the essential components for the initiation of protein synthesis. Protects formylmethionyl-tRNA from spontaneous hydrolysis and promotes its binding to the 30S ribosomal subunits. Also involved in the hydrolysis of GTP during the formation of the 70S ribosomal complex. This Vibrio vulnificus (strain CMCP6) protein is Translation initiation factor IF-2.